The chain runs to 203 residues: Inositol diphosphatase DSP3 (203 aa).

One can recognise a Tyrosine-protein phosphatase domain in the interval 20–169 (NFSMVEDGIY…FDIVSLRQCL (150 aa)). The tract at residues 76-88 (FGIEGKTDPPTPM) is WPD loop important for active site topology. The Phosphocysteine intermediate role is filled by Cys-112.

This sequence belongs to the protein-tyrosine phosphatase family. Atypical dual-specificity phosphatase Siw14-like subfamily. In terms of assembly, interacts with FLZ1. Highly expressed in roots, stems and flowers. Expressed at low levels in leaves and siliques.

It is found in the nucleus. The enzyme catalyses 5-diphospho-1D-myo-inositol 1,2,3,4,6-pentakisphosphate + H2O = 1D-myo-inositol hexakisphosphate + phosphate + H(+). It carries out the reaction 1,5-bis(diphospho)-1D-myo-inositol 2,3,4,6-tetrakisphosphate + H2O = 1-diphospho-1D-myo-inositol 2,3,4,5,6-pentakisphosphate + phosphate + 2 H(+). The catalysed reaction is 3,5-bis(diphospho)-1D-myo-inositol 1,2,4,6-tetrakisphosphate + H2O = 3-diphospho-1D-myo-inositol 1,2,4,5,6-pentakisphosphate + phosphate + 2 H(+). It catalyses the reaction 6-diphospho-1D-myo-inositol pentakisphosphate + H2O = 1D-myo-inositol hexakisphosphate + phosphate + H(+). In terms of biological role, cleaves the beta-phosphate at the 5-position of soluble inositol pyrophosphates. Has highest activity on 5-diphosphoinositol 1,2,3,4,6-pentakisphosphate (5-InsP(7)), 1,5-bis-diphosphoinositol 2,3,4,6-tetrakisphosphate (1,5-InsP(8)) and 3,5-InsP(8). Possesses phosphotyrosine phosphatase activity in vitro. Dephosphorylates the phosphoinositides PI(3,5)P2. Hydrolyzes para-nitrophenyl phosphate and O-methylfluorescein phosphate in vitro. This is Inositol diphosphatase DSP3 from Arabidopsis thaliana (Mouse-ear cress).